A 484-amino-acid chain; its full sequence is ATP-dependent RNA helicase DDX25 (484 aa).

The residue at position 49 (threonine 49) is a Phosphothreonine. A Nuclear export signal motif is present at residues 62–75 (LAANSLLNKLIRQS). A Q motif motif is present at residues 98–126 (KTFEELRLKEELLKGIYAMGFNRPSKIQE). The short motif at 101-115 (EELRLKEELLKGIYA) is the Nuclear localization signal element. Positions 131–301 (MMLAHPPQNL…ERIIPDPNVI (171 aa)) constitute a Helicase ATP-binding domain. 144-151 (SQSGTGKT) provides a ligand contact to ATP. The DEAD box signature appears at 248–251 (DEAD). One can recognise a Helicase C-terminal domain in the interval 312–479 (NIRQYYVLCE…QLDPEDMDEI (168 aa)).

The protein belongs to the DEAD box helicase family. Post-translationally, phosphorylated on threonine residues. The phosphorylated form is found in the cytoplasm but not in the nucleus. As to expression, isoform 1 is expressed in germ cells. Isoform 2 is expressed in Leydig cells and in round spermatids of adult testis upon gonadotropin stimulation.

Its subcellular location is the cytoplasm. The protein resides in the nucleus. It catalyses the reaction ATP + H2O = ADP + phosphate + H(+). Functionally, ATP-dependent RNA helicase. Required for mRNA export and translation regulation during spermatid development. The polypeptide is ATP-dependent RNA helicase DDX25 (Ddx25) (Mus musculus (Mouse)).